The sequence spans 333 residues: Ephrin-B2 (333 aa).

An N-terminal signal peptide occupies residues 1–27; it reads MAVRRDSVWKYCWGVLMVLCRTAISKS. An Ephrin RBD domain is found at 28–164; it reads IVLEPIYWNS…TRAMKILMKV (137 aa). At 28-229 the chain is on the extracellular side; it reads IVLEPIYWNS…ILGSEVALFA (202 aa). N-linked (GlcNAc...) asparagine glycosylation occurs at Asn36. Intrachain disulfides connect Cys62/Cys101 and Cys89/Cys153. The N-linked (GlcNAc...) asparagine glycan is linked to Asn139. The disordered stretch occupies residues 165-213; it reads GQDASSAGSTRNKDPTRRPELEAGTNGRSSTTSPFVKPNPGSSTDGNSA. Residues 175-185 show a composition bias toward basic and acidic residues; sequence RNKDPTRRPEL. The segment covering 190 to 213 has biased composition (polar residues); that stretch reads NGRSSTTSPFVKPNPGSSTDGNSA. The chain crosses the membrane as a helical span at residues 230-250; it reads GIASGCIIFIVIIITLVVLLL. Topologically, residues 251–333 are cytoplasmic; it reads KYRRRHRKHS…QSPANIYYKV (83 aa). Ser260 carries the post-translational modification Phosphoserine. Phosphothreonine is present on Thr274. Arg277 carries the post-translational modification Omega-N-methylarginine. Residues 331-333 carry the PDZ-binding motif; it reads YKV.

It belongs to the ephrin family. In terms of assembly, interacts with PDZRN3. Binds to the receptor tyrosine kinases EPHA4, EPHB4 and EPHA3. As to quaternary structure, (Microbial infection) Interacts with Hendra virus and Nipah virus G protein. In terms of processing, inducible phosphorylation of tyrosine residues in the cytoplasmic domain. Lung and kidney.

The protein resides in the cell membrane. It is found in the cell junction. Its subcellular location is the adherens junction. Functionally, cell surface transmembrane ligand for Eph receptors, a family of receptor tyrosine kinases which are crucial for migration, repulsion and adhesion during neuronal, vascular and epithelial development. Binds promiscuously Eph receptors residing on adjacent cells, leading to contact-dependent bidirectional signaling into neighboring cells. The signaling pathway downstream of the receptor is referred to as forward signaling while the signaling pathway downstream of the ephrin ligand is referred to as reverse signaling. Binds to receptor tyrosine kinase including EPHA4, EPHA3 and EPHB4. Together with EPHB4 plays a central role in heart morphogenesis and angiogenesis through regulation of cell adhesion and cell migration. EPHB4-mediated forward signaling controls cellular repulsion and segregation from EFNB2-expressing cells. May play a role in constraining the orientation of longitudinally projecting axons. In terms of biological role, (Microbial infection) Acts as a receptor for Hendra virus and Nipah virus. This Homo sapiens (Human) protein is Ephrin-B2 (EFNB2).